A 148-amino-acid chain; its full sequence is NADPH-dependent 7-cyano-7-deazaguanine reductase (148 aa).

Cys50 (thioimide intermediate) is an active-site residue. Asp57 (proton donor) is an active-site residue. Substrate-binding positions include 72 to 74 and 91 to 92; these read VES and HE.

The protein belongs to the GTP cyclohydrolase I family. QueF type 1 subfamily.

It is found in the cytoplasm. It catalyses the reaction 7-aminomethyl-7-carbaguanine + 2 NADP(+) = 7-cyano-7-deazaguanine + 2 NADPH + 3 H(+). It functions in the pathway tRNA modification; tRNA-queuosine biosynthesis. Functionally, catalyzes the NADPH-dependent reduction of 7-cyano-7-deazaguanine (preQ0) to 7-aminomethyl-7-deazaguanine (preQ1). In Helicobacter pylori (strain G27), this protein is NADPH-dependent 7-cyano-7-deazaguanine reductase.